A 1250-amino-acid chain; its full sequence is Protein SSD1 (1250 aa).

Residues 1–22 show a composition bias toward polar residues; the sequence is MSKNSNVNNNRSQEPNNMFVQT. The segment at 1–32 is disordered; sequence MSKNSNVNNNRSQEPNNMFVQTTGGGKNAPKQ. The residue at position 2 (S2) is an N-acetylserine. Residue S40 is modified to Phosphoserine. The disordered stretch occupies residues 79 to 163; the sequence is TGQYLSGNSG…SSIYGHSRRH (85 aa). Residues 84–94 show a composition bias toward polar residues; sequence SGNSGSNNHFT. The span at 124–145 shows a compositional bias: low complexity; it reads NNSGYYHNSYDNNNNSNNPGSN. S164 and S183 each carry phosphoserine. Polar residues predominate over residues 197-208; it reads QADSGSNSTTEQ. Disordered stretches follow at residues 197-338, 418-443, and 455-517; these read QADS…GGRK, KEKE…SSDD, and SNNF…DDVE. At T227 the chain carries Phosphothreonine. A compositionally biased stretch (polar residues) spans 264-276; that stretch reads NEYSPGINSNWRN. Low complexity predominate over residues 277–287; sequence QSQQPQQQLSP. A phosphoserine mark is found at S286 and S322. Residues 319–329 are compositionally biased toward polar residues; that stretch reads SNSSVHSFSSQ. Residues 481 to 495 are compositionally biased toward polar residues; it reads STINNDSDSLSSPTK. 2 positions are modified to phosphoserine: S491 and S492. Basic residues predominate over residues 497–510; the sequence is GVRRRSSLKQRPTQ. One can recognise a CSD2 domain in the interval 582-657; sequence AWFKPTDKKV…EIDSILRDNN (76 aa). Y688 carries the post-translational modification Phosphotyrosine. One can recognise an RNB domain in the interval 694–1015; it reads DTNEYNIFAI…VHRQLKAVIH (322 aa). In terms of domain architecture, DIS3L2 C-terminal spans 1064 to 1148; it reads GQLLTMATVL…SIKNKFRSTA (85 aa).

The protein belongs to the RNR ribonuclease family.

Functionally, can suppress the lethality due to deletion of SIT4, and partially the defects due to BCY1 disruption. Is implicated in the control of the cell cycle G1 phase. The chain is Protein SSD1 (SSD1) from Saccharomyces cerevisiae (strain ATCC 204508 / S288c) (Baker's yeast).